A 304-amino-acid polypeptide reads, in one-letter code: Carbonic anhydrase 5A, mitochondrial (304 aa).

The transit peptide at 1–34 (MLRAKMLGRGPYKPLAILRHMGPLCATRPQHWRF) directs the protein to the mitochondrion. Residues 35–295 (QHSYAEKHSN…LRGRNVRSSF (261 aa)) form the Alpha-carbonic anhydrase domain. Residues H129, H131, and H154 each contribute to the Zn(2+) site.

The protein belongs to the alpha-carbonic anhydrase family. Zn(2+) serves as cofactor. As to expression, high in liver, also detected in heart, lung, kidney, spleen and intestine.

Its subcellular location is the mitochondrion. The catalysed reaction is hydrogencarbonate + H(+) = CO2 + H2O. Mitochondrial carbonic anhydrase that catalyzes the reversible conversion of carbon dioxide to bicarbonate/HCO3. Mitochondria are impermeable to HCO3, and thus this intramitochondrial carbonic anhydrase is pivotal in providing HCO3 for multiple mitochondrial enzymes that catalyze the formation of essential metabolites of intermediary metabolism in the urea and Krebs cycles. This chain is Carbonic anhydrase 5A, mitochondrial, found in Rattus norvegicus (Rat).